The primary structure comprises 126 residues: uncharacterized protein (126 aa).

This is an uncharacterized protein from Archaeoglobus fulgidus (strain ATCC 49558 / DSM 4304 / JCM 9628 / NBRC 100126 / VC-16).